The chain runs to 846 residues: Rho GTPase-activating protein 12 (846 aa).

The SH3 domain occupies 12 to 74; the sequence is PGQVYIEVEY…PAQYVKEVTR (63 aa). Polar residues predominate over residues 152–175; the sequence is LTHNNGKFNNDSHSPKVSSQNRTR. The disordered stretch occupies residues 152-241; sequence LTHNNGKFNN…PPNQGRPDSP (90 aa). A phosphoserine mark is found at S165 and S176. Over residues 191–200 the composition is skewed to polar residues; that stretch reads TSFSQEQSCD. Residues S201, S213, and S215 each carry the phosphoserine modification. Polar residues predominate over residues 224 to 234; sequence TEQIRATTPPN. Residues T230 and T231 each carry the phosphothreonine modification. At S240 the chain carries Phosphoserine. Residue Y243 is modified to Phosphotyrosine. 2 consecutive WW domains span residues 265-298 and 358-391; these read IQIN…PPRW and DYTN…LPKY. The disordered stretch occupies residues 293 to 316; it reads WKPPRWTRDASISKGDFQNPGDQE. Disordered regions lie at residues 428–466 and 580–629; these read DTND…DQEK and ETDE…TKKN. A compositionally biased stretch (polar residues) spans 445–461; it reads NESSPSSPKHQDTASSP. The PH domain occupies 463 to 575; the sequence is DQEKYGLLNV…WFKVLSSTIN (113 aa). The segment covering 580 to 590 has biased composition (acidic residues); that stretch reads ETDEGIEEEIP. Position 592 is a phosphoserine (S592). Basic and acidic residues predominate over residues 594 to 609; that stretch reads GIEKHDKEKEQKDPKK. Positions 656-844 constitute a Rho-GAP domain; that stretch reads SNLANLCQRE…LILLELSSIF (189 aa).

In terms of biological role, GTPase activator for the Rho-type GTPases by converting them to an inactive GDP-bound state. The protein is Rho GTPase-activating protein 12 (ARHGAP12) of Homo sapiens (Human).